The sequence spans 503 residues: Aspartyl/glutamyl-tRNA(Asn/Gln) amidotransferase subunit B (503 aa).

It belongs to the GatB/GatE family. GatB subfamily. In terms of assembly, heterotrimer of A, B and C subunits.

The enzyme catalyses L-glutamyl-tRNA(Gln) + L-glutamine + ATP + H2O = L-glutaminyl-tRNA(Gln) + L-glutamate + ADP + phosphate + H(+). It carries out the reaction L-aspartyl-tRNA(Asn) + L-glutamine + ATP + H2O = L-asparaginyl-tRNA(Asn) + L-glutamate + ADP + phosphate + 2 H(+). Allows the formation of correctly charged Asn-tRNA(Asn) or Gln-tRNA(Gln) through the transamidation of misacylated Asp-tRNA(Asn) or Glu-tRNA(Gln) in organisms which lack either or both of asparaginyl-tRNA or glutaminyl-tRNA synthetases. The reaction takes place in the presence of glutamine and ATP through an activated phospho-Asp-tRNA(Asn) or phospho-Glu-tRNA(Gln). This is Aspartyl/glutamyl-tRNA(Asn/Gln) amidotransferase subunit B from Cereibacter sphaeroides (strain KD131 / KCTC 12085) (Rhodobacter sphaeroides).